Here is a 310-residue protein sequence, read N- to C-terminus: Protoheme IX farnesyltransferase 2 (310 aa).

The next 9 membrane-spanning stretches (helical) occupy residues 21–41 (IWYLLVFTAFGAAVAASGIYG), 46–66 (IATWALMLFSVAAGSASANVL), 99–119 (FGLFLAGASMVMAACIALTTT), 125–145 (WAAAFIAFGLFNNVLVYSYML), 153–173 (IVLGGLCGGMPPMIGWVAVTT), 180–200 (GLVMGGLVFIWTPMHIWALTL), 226–246 (VIAVSTVAMALFSLAPLLITL), 256–276 (VYLATAAASGALIIALSAWVV), and 284–304 (AWVLFKFSSPYLAVLFIALMV).

The protein belongs to the UbiA prenyltransferase family. Protoheme IX farnesyltransferase subfamily.

It localises to the cell membrane. It carries out the reaction heme b + (2E,6E)-farnesyl diphosphate + H2O = Fe(II)-heme o + diphosphate. It functions in the pathway porphyrin-containing compound metabolism; heme O biosynthesis; heme O from protoheme: step 1/1. Functionally, converts heme B (protoheme IX) to heme O by substitution of the vinyl group on carbon 2 of heme B porphyrin ring with a hydroxyethyl farnesyl side group. The polypeptide is Protoheme IX farnesyltransferase 2 (Cenarchaeum symbiosum (strain A)).